A 515-amino-acid polypeptide reads, in one-letter code: Nuclear hormone receptor family member nhr-62 (515 aa).

Positions 95–170 form a DNA-binding region, nuclear receptor; that stretch reads NLVCVVCGDQ…AGMNPRAVQS (76 aa). NR C4-type zinc fingers lie at residues 98-118 and 134-153; these read CVVC…CNGC and CRFE…CRAC. The interval 169 to 195 is disordered; that stretch reads QSERVEREQNGSPNQIEEDDYKDLSSP. One can recognise an NR LBD domain in the interval 225-509; the sequence is EMAKLSEQIV…YLCHEVQFIQ (285 aa). An AF-2 region spans residues 498 to 509; the sequence is SEYLCHEVQFIQ.

It belongs to the nuclear hormone receptor family. Widely expressed at a low level in many tissues including the pharynx, sensory neurons, intestine, spermatheca, hypodermis, and excretory cell.

The protein resides in the nucleus. Its function is as follows. Orphan nuclear hormone receptor. Required for metabolic and physiologic responses associated with dietary-restriction-induced longevity. Modulates triglyceride and lipid metabolism and autophagy, associated with dietary-restriction, probably acting via regulation of transcription of target genes. This Caenorhabditis elegans protein is Nuclear hormone receptor family member nhr-62 (nhr-62).